The chain runs to 188 residues: Adenine phosphoribosyltransferase (188 aa).

The protein belongs to the purine/pyrimidine phosphoribosyltransferase family. In terms of assembly, homodimer.

It is found in the cytoplasm. It catalyses the reaction AMP + diphosphate = 5-phospho-alpha-D-ribose 1-diphosphate + adenine. The protein operates within purine metabolism; AMP biosynthesis via salvage pathway; AMP from adenine: step 1/1. Catalyzes a salvage reaction resulting in the formation of AMP, that is energically less costly than de novo synthesis. In Paraburkholderia xenovorans (strain LB400), this protein is Adenine phosphoribosyltransferase.